Reading from the N-terminus, the 84-residue chain is Perlustrin (84 aa).

Positions 1–82 (LSCASCENAA…LDFKGVCARV (82 aa)) constitute an IGFBP N-terminal domain. Disulfide bonds link Cys3–Cys28, Cys6–Cys30, Cys11–Cys31, Cys18–Cys34, Cys42–Cys55, and Cys49–Cys79.

In terms of tissue distribution, shell.

Binds human IGF1 and IGF2 and bovine insulin. The sequence is that of Perlustrin from Haliotis laevigata (Smooth Australian abalone).